A 333-amino-acid chain; its full sequence is Small ribosomal subunit protein uS2 (333 aa).

The protein belongs to the universal ribosomal protein uS2 family.

The chain is Small ribosomal subunit protein uS2 from Azorhizobium caulinodans (strain ATCC 43989 / DSM 5975 / JCM 20966 / LMG 6465 / NBRC 14845 / NCIMB 13405 / ORS 571).